The sequence spans 277 residues: MAPLRFSANLSWLFPELSGLPARVRAAGSSGFEAVEVAWPYAETPEALARAAREAGLRLVLINTPPGDQEKGEMGLGAVPGRQAAFREGLEQAVRYAKALGCPRIHLMAGRVPQGADRIAVKAEMEAVFLENLRHAAGVLAQEDLVGLLEPINTRITDPQYFLDTPQQAAAILQKVGRPNLQLQMDIFHWQIMDGNLTGNIREFLPIVGHVQVAQVPGRGEPSSPGELNFPYLFQLLEDEGYKGFVGCEYQPRGDTVEGLSWLRSYWDRRGHPEAGQ.

Residues Glu-150 and Glu-249 each act as proton donor/acceptor in the active site.

This sequence belongs to the hyi family.

It carries out the reaction 3-hydroxypyruvate = 2-hydroxy-3-oxopropanoate. Its function is as follows. Catalyzes the reversible isomerization between hydroxypyruvate and 2-hydroxy-3-oxopropanoate (also termed tartronate semialdehyde). The polypeptide is Putative hydroxypyruvate isomerase (HYI) (Homo sapiens (Human)).